A 358-amino-acid polypeptide reads, in one-letter code: tRNA(Ile)-lysidine synthase (358 aa).

Residue 35 to 40 (SGGPDS) participates in ATP binding.

This sequence belongs to the tRNA(Ile)-lysidine synthase family.

The protein resides in the cytoplasm. It catalyses the reaction cytidine(34) in tRNA(Ile2) + L-lysine + ATP = lysidine(34) in tRNA(Ile2) + AMP + diphosphate + H(+). In terms of biological role, ligates lysine onto the cytidine present at position 34 of the AUA codon-specific tRNA(Ile) that contains the anticodon CAU, in an ATP-dependent manner. Cytidine is converted to lysidine, thus changing the amino acid specificity of the tRNA from methionine to isoleucine. The sequence is that of tRNA(Ile)-lysidine synthase from Bradyrhizobium sp. (strain BTAi1 / ATCC BAA-1182).